The sequence spans 451 residues: Photosystem II CP43 reaction center protein (451 aa).

The Cytoplasmic portion of the chain corresponds to 1 to 46 (ATNRDQESSGFAWWAGNARLINLSGKLLGAHVAHAGLIVFWAGAMT). Residues W13, L27, and A30 each contribute to the chlorophyll a site. The helical transmembrane segment at 47–71 (LFELAHFIPEKPMYEQGLILIPHIA) threads the bilayer. Residues 72 to 111 (TLGWGVGPGGEVVDTFPFFVVGVVHLISSAVLGFGGVYHA) are Lumenal-facing. Residues V92 and G106 each coordinate chlorophyll a. The helical transmembrane segment at 112-133 (IRGPETLEEYSSFFGYDWKDKN) threads the bilayer. At 134–155 (KMTTILGFHLIVLGIGALLLVA) the chain is on the cytoplasmic side. I138 is a binding site for chlorophyll a. Residues 156 to 178 (KAMFFGGLYDTWAPGGGDVRVIT) form a helical membrane-spanning segment. Residues 179 to 232 (NPTLDPRVIFGYLLKSPFGGEGWIVSVNNLEDVVGGHIWIGLICIAGGIWHILT) lie on the Lumenal side of the membrane. Positions 211 and 225 each coordinate chlorophyll a. Residues 233 to 253 (TPFGWARRAFIWSGEAYLSYS) form a helical membrane-spanning segment. The Cytoplasmic portion of the chain corresponds to 254–268 (LGALSMMGFIATCFV). Residues 269–290 (WFNNTVYPSEFYGPTGPEASQA) traverse the membrane as a helical segment. Residues 291–424 (QAMTFLIRDQ…FLVGHLWHAG (134 aa)) are Lumenal-facing. E345 is a [CaMn4O5] cluster binding site. Chlorophyll a is bound by residues L404, F415, and G418. A helical membrane pass occupies residues 425 to 449 (RARAAAAGFEKGIDRESEPVLSMPS). At 450-451 (LD) the chain is on the cytoplasmic side.

It belongs to the PsbB/PsbC family. PsbC subfamily. PSII is composed of 1 copy each of membrane proteins PsbA, PsbB, PsbC, PsbD, PsbE, PsbF, PsbH, PsbI, PsbJ, PsbK, PsbL, PsbM, PsbT, PsbX, PsbY, PsbZ, Psb30/Ycf12, peripheral proteins PsbO, CyanoQ (PsbQ), PsbU, PsbV and a large number of cofactors. It forms dimeric complexes. Binds multiple chlorophylls and provides some of the ligands for the Ca-4Mn-5O cluster of the oxygen-evolving complex. It may also provide a ligand for a Cl- that is required for oxygen evolution. PSII binds additional chlorophylls, carotenoids and specific lipids. serves as cofactor.

The protein localises to the cellular thylakoid membrane. Its function is as follows. One of the components of the core complex of photosystem II (PSII). It binds chlorophyll and helps catalyze the primary light-induced photochemical processes of PSII. PSII is a light-driven water:plastoquinone oxidoreductase, using light energy to abstract electrons from H(2)O, generating O(2) and a proton gradient subsequently used for ATP formation. This chain is Photosystem II CP43 reaction center protein, found in Thermostichus vulcanus (Synechococcus vulcanus).